A 585-amino-acid polypeptide reads, in one-letter code: Ras-specific guanine nucleotide-releasing factor RalGPS1 (585 aa).

The 240-residue stretch at 50–289 folds into the Ras-GEF domain; that stretch reads TPEEFASQIT…YKLSLRIEPG (240 aa). Disordered regions lie at residues 289–342 and 378–410; these read GSSS…KSHS and RSPR…SEEM. The segment covering 303-312 has biased composition (low complexity); the sequence is AGPSAGSSSA. A PXXP motif is present at residues 330–333; sequence PTPP. Over residues 385 to 396 the composition is skewed to polar residues; it reads THTSSTAITNGL. In terms of domain architecture, PH spans 459-571; that stretch reads VPTMEGPLRR…WHKHLDDACK (113 aa). The segment at 461-585 is required for stimulation of nucleotide exchange by RALA; that stretch reads TMEGPLRRKT…QVPANLMSFE (125 aa).

In terms of assembly, interacts with the SH3 domains of GRB2, NCK1, PLCG1 and SRC.

The protein localises to the cytoplasm. It is found in the cell membrane. In terms of biological role, guanine nucleotide exchange factor for the small GTPase RALA. May be involved in cytoskeleton organization. The polypeptide is Ras-specific guanine nucleotide-releasing factor RalGPS1 (Ralgps1) (Mus musculus (Mouse)).